A 95-amino-acid polypeptide reads, in one-letter code: METKHIILLAIVAIIIALPLIIYAGKGEEEGYFGGSDDQGCEVVEELGYKPWFHPIWEPPSGEIESLLFALQAAIGAIIIGYYIGYYNAKRQVAA.

The next 2 helical transmembrane spans lie at 5–25 (HIIL…IYAG) and 67–87 (LLFA…IGYY).

The protein belongs to the CbiN family. As to quaternary structure, forms an energy-coupling factor (ECF) transporter complex composed of an ATP-binding protein (A component, CbiO), a transmembrane protein (T component, CbiQ) and 2 possible substrate-capture proteins (S components, CbiM and CbiN) of unknown stoichimetry.

The protein resides in the cell membrane. Its pathway is cofactor biosynthesis; adenosylcobalamin biosynthesis. In terms of biological role, part of the energy-coupling factor (ECF) transporter complex CbiMNOQ involved in cobalt import. In Methanocaldococcus jannaschii (strain ATCC 43067 / DSM 2661 / JAL-1 / JCM 10045 / NBRC 100440) (Methanococcus jannaschii), this protein is Cobalt transport protein CbiN.